A 372-amino-acid polypeptide reads, in one-letter code: Flagellar P-ring protein (372 aa).

The N-terminal stretch at 1-26 (MNLSSLPFRLLAAAVALCAIAAPASA) is a signal peptide.

Belongs to the FlgI family. In terms of assembly, the basal body constitutes a major portion of the flagellar organelle and consists of four rings (L,P,S, and M) mounted on a central rod.

The protein localises to the periplasm. It localises to the bacterial flagellum basal body. In terms of biological role, assembles around the rod to form the L-ring and probably protects the motor/basal body from shearing forces during rotation. In Xanthomonas axonopodis pv. citri (strain 306), this protein is Flagellar P-ring protein.